Reading from the N-terminus, the 373-residue chain is Probable ethanolamine permease EutH (373 aa).

10 helical membrane-spanning segments follow: residues 5-25 (EIII…KIIG), 38-58 (IMAM…APVL), 61-81 (ILSP…AMFA), 111-131 (ILGS…LGII), 143-163 (VLSG…VAGF), 166-186 (IMIF…MLGL), 197-217 (FTIF…AGAI), 236-256 (IEIV…VFVI), 307-327 (VAFA…TAGV), and 331-351 (MIFP…AVGI).

Belongs to the EutH family.

The protein resides in the cell membrane. It carries out the reaction ethanolamine(in) = ethanolamine(out). In terms of biological role, probably involved in the diffusion of protonated ethanolamine (EA) into the cell at low pH. At low pH most EA is protonated, and this permease becomes necessary. Contributes to bacterial survival and replication in acidic macrophage vacuoles, but not to bacterial uptake by macrophages. The polypeptide is Probable ethanolamine permease EutH (Listeria monocytogenes serotype 1/2a (strain 10403S)).